We begin with the raw amino-acid sequence, 34 residues long: uncharacterized protein (34 aa).

A helical transmembrane segment spans residues 10-30 (LIITSSFFAIAVVLVLSVLLI).

Its subcellular location is the membrane. This is an uncharacterized protein from Shigella flexneri.